A 753-amino-acid chain; its full sequence is Ribosome biogenesis protein BOP1 homolog (753 aa).

The disordered stretch occupies residues 1-155; it reads MTKRSKGANE…RNTVGNVPLK (155 aa). 2 stretches are compositionally biased toward basic and acidic residues: residues 7–18 and 30–41; these read GANEDKLIETKS and KPVEAESLKEED. Composition is skewed to acidic residues over residues 64–75 and 83–109; these read DDFDSDFSDSED and EDGDVEFSDDDDVLEHDGSIDNEDDDG. Over residues 110-121 the composition is skewed to basic and acidic residues; sequence SEHVGSDNNEEH. The segment covering 122-142 has biased composition (acidic residues); the sequence is GSDEDSERGEAVEESDSSEDE. WD repeat units lie at residues 421-462, 464-502, 539-581, 626-665, 669-708, and 722-753; these read GHTG…KVWQ, DEAIMCVAWNPLSRLPVLAVAMGRDLFFLNTELGTDEEQ, RHFK…TQRL, TGLREISSMAIHPGGDNLIVGSKEGKMCWFDMDLSSKPYK, NHPKDITNVAVHRSYPLFASCSEDSTAYVFHGMVYNDLNQ, and SSKGGVLDCKFHPRQPWLFTAGADSIIKLYCH.

Belongs to the WD repeat BOP1/ERB1 family. Interacts with PES. Interacts with WDR12.

It is found in the nucleus. The protein localises to the nucleolus. It localises to the nucleoplasm. In terms of biological role, required for maturation of ribosomal RNAs and formation of the large ribosomal subunit. Plays an essential role in cell growth and survival through its regulation of ribosome biogenesis and mitotic progression. In Arabidopsis thaliana (Mouse-ear cress), this protein is Ribosome biogenesis protein BOP1 homolog.